The primary structure comprises 299 residues: tRNA uridine(34) hydroxylase (299 aa).

The region spanning 132–226 (AGRPVVMLDT…YFEEVGGAHY (95 aa)) is the Rhodanese domain. The active-site Cysteine persulfide intermediate is the Cys-186.

It belongs to the TrhO family.

The catalysed reaction is uridine(34) in tRNA + AH2 + O2 = 5-hydroxyuridine(34) in tRNA + A + H2O. Catalyzes oxygen-dependent 5-hydroxyuridine (ho5U) modification at position 34 in tRNAs. This chain is tRNA uridine(34) hydroxylase, found in Burkholderia pseudomallei (strain 1106a).